An 80-amino-acid chain; its full sequence is Protein pegasus (80 aa).

A signal peptide spans 1 to 22 (MKLSAVLLAIALLALSLVQCLG). A Kazal-like domain is found at 24-80 (PDPSTKCVMECDTQEYRSICAADDKGSTKTYRNLCVMKTENCLQNANFQKISDKECP). 3 disulfides stabilise this stretch: Cys-30–Cys-65, Cys-34–Cys-58, and Cys-43–Cys-79.

In terms of assembly, interacts with wg; the interaction facilitates short-range diffusion of wg. Strongly expressed in the developing fly wing but is excluded from the presumptive wing margin.

It is found in the secreted. Functionally, increases short-range diffusion of the wingless/wg protein, enhancing its signaling and expression of target genes required for wing margin morphogenesis. May act as a serine protease inhibitor since it possess the Kazal serine protease inhibitor signature. The polypeptide is Protein pegasus (Drosophila melanogaster (Fruit fly)).